The chain runs to 76 residues: Small ribosomal subunit protein bS18 (76 aa).

It belongs to the bacterial ribosomal protein bS18 family. Part of the 30S ribosomal subunit. Forms a tight heterodimer with protein bS6.

Binds as a heterodimer with protein bS6 to the central domain of the 16S rRNA, where it helps stabilize the platform of the 30S subunit. This Pseudomonas aeruginosa (strain LESB58) protein is Small ribosomal subunit protein bS18.